Here is a 194-residue protein sequence, read N- to C-terminus: Inosine triphosphate pyrophosphatase (194 aa).

11-16 (TGNAKK) contacts ITP. Mg(2+) is bound at residue Glu-39. ITP-binding positions include Lys-51, 67-68 (DT), Lys-84, 143-146 (FGWD), Lys-166, and 171-172 (HR).

It belongs to the HAM1 NTPase family. Homodimer. The cofactor is Mg(2+). It depends on Mn(2+) as a cofactor.

It localises to the cytoplasm. The enzyme catalyses ITP + H2O = IMP + diphosphate + H(+). It catalyses the reaction dITP + H2O = dIMP + diphosphate + H(+). It carries out the reaction XTP + H2O = XMP + diphosphate + H(+). In terms of biological role, pyrophosphatase that hydrolyzes non-canonical purine nucleotides such as inosine triphosphate (ITP), deoxyinosine triphosphate (dITP) or xanthosine 5'-triphosphate (XTP) to their respective monophosphate derivatives. The enzyme does not distinguish between the deoxy- and ribose forms. Probably excludes non-canonical purines from RNA and DNA precursor pools, thus preventing their incorporation into RNA and DNA and avoiding chromosomal lesions. This Dictyostelium discoideum (Social amoeba) protein is Inosine triphosphate pyrophosphatase (itpa).